The chain runs to 158 residues: Transcription elongation factor GreA (158 aa).

This sequence belongs to the GreA/GreB family.

In terms of biological role, necessary for efficient RNA polymerase transcription elongation past template-encoded arresting sites. The arresting sites in DNA have the property of trapping a certain fraction of elongating RNA polymerases that pass through, resulting in locked ternary complexes. Cleavage of the nascent transcript by cleavage factors such as GreA or GreB allows the resumption of elongation from the new 3'terminus. GreA releases sequences of 2 to 3 nucleotides. The polypeptide is Transcription elongation factor GreA (Methylobacterium sp. (strain 4-46)).